A 234-amino-acid polypeptide reads, in one-letter code: UstYa family oxidase phomYd' (234 aa).

Residues 1–26 (MEKFFSPSRHNYADLSPTDVPASEES) are disordered. The helical transmembrane segment at 47–69 (VLVNRLLAASTVALVMVSLWLGW) threads the bilayer. The short motif at 151–155 (HWDHC) is the HXXHC 1 element. Asn-208 is a glycosylation site (N-linked (GlcNAc...) asparagine).

Belongs to the ustYa family.

The protein localises to the membrane. Its pathway is mycotoxin biosynthesis. In terms of biological role, ustYa family oxidase; part of the gene cluster that mediates the biosynthesis of the phomopsins, a group of hexapeptide mycotoxins which infects lupins and causes lupinosis disease in livestock. Within the pathway, phomYd' catalyzes the desaturation of the Asp moiety into 2,3-dehydroaspartic acid (dAsp). The pathway starts with the processing of the precursor phomA' by several endopeptidases including kexin proteases as well as the cluster-specific S41 family peptidase phomP1 and the oligopeptidase phomG' to produce 10 identical copies of the hexapeptide Tyr-Val-Ile-Pro-Ile-Asp. After being excised from the precursor peptide, the core peptides are cyclized and modified post-translationally by enzymes encoded within the gene cluster. The timing and order of proteolysis of the phomA' precursor and PTMs are still unknown. Two tyrosinase-like enzymes, phomQ1' and phomQ2, catalyze the chlorination and hydroxylation of Tyr, respectively. PhomYb, is proposed to be involved in the construction of the macrocyclic structure. The other 4 ustYa family proteins may be involved in PTMs that generate the unique structure of phomopsin A. PhomYa' is required for the hydroxylation of C-beta of Tyr. PhomYc', phomYd', and phomYe are responsible for the biosynthesis of 2,3-dehydroisoleucine (dIle), 2,3-dehydroaspartic acid (dAsp), and 3,4-dehydroproline (dPro), respectively. While dIle formation by phomYc' is indispensable for the installation of dAsp by phomYd', the order of the other PTMs have not been elucidated yet. Most of the biosynthetic enzymes likely have broad substrate specificity, and thus, there might be a metabolic grid from a precursor to phomopsin A. The enzyme(s) responsible for the biosynthesis of 3,4-dehydrovaline (dVal) have also not been identified yet. Finally, phomM' acts as an S-adenosylmethionine-dependent alpha-N-methyltransferase that catalyzes two successive N-methylation reactions, converting N-desmethyl-phomopsin A to phomopsin A and phomopsin A further to an N,N-dimethylated congener called phomopsin E. This chain is UstYa family oxidase phomYd', found in Diaporthe leptostromiformis (Lupinosis disease fungus).